We begin with the raw amino-acid sequence, 541 residues long: Chaperonin GroEL 1 (541 aa).

ATP contacts are provided by residues 29-32 (TLGP), 86-90 (DGTTT), G413, and D492.

The protein belongs to the chaperonin (HSP60) family. Forms a cylinder of 14 subunits composed of two heptameric rings stacked back-to-back. Interacts with the co-chaperonin GroES.

Its subcellular location is the cytoplasm. The catalysed reaction is ATP + H2O + a folded polypeptide = ADP + phosphate + an unfolded polypeptide.. Functionally, together with its co-chaperonin GroES, plays an essential role in assisting protein folding. The GroEL-GroES system forms a nano-cage that allows encapsulation of the non-native substrate proteins and provides a physical environment optimized to promote and accelerate protein folding. In Rhodococcus jostii (strain RHA1), this protein is Chaperonin GroEL 1.